We begin with the raw amino-acid sequence, 103 residues long: Phosphoribosyl-ATP pyrophosphatase (103 aa).

Belongs to the PRA-PH family.

Its subcellular location is the cytoplasm. The enzyme catalyses 1-(5-phospho-beta-D-ribosyl)-ATP + H2O = 1-(5-phospho-beta-D-ribosyl)-5'-AMP + diphosphate + H(+). It participates in amino-acid biosynthesis; L-histidine biosynthesis; L-histidine from 5-phospho-alpha-D-ribose 1-diphosphate: step 2/9. This Listeria monocytogenes serotype 4a (strain HCC23) protein is Phosphoribosyl-ATP pyrophosphatase.